Here is a 177-residue protein sequence, read N- to C-terminus: ATP synthase subunit delta (177 aa).

Belongs to the ATPase delta chain family. F-type ATPases have 2 components, F(1) - the catalytic core - and F(0) - the membrane proton channel. F(1) has five subunits: alpha(3), beta(3), gamma(1), delta(1), epsilon(1). F(0) has three main subunits: a(1), b(2) and c(10-14). The alpha and beta chains form an alternating ring which encloses part of the gamma chain. F(1) is attached to F(0) by a central stalk formed by the gamma and epsilon chains, while a peripheral stalk is formed by the delta and b chains.

It localises to the cell inner membrane. Its function is as follows. F(1)F(0) ATP synthase produces ATP from ADP in the presence of a proton or sodium gradient. F-type ATPases consist of two structural domains, F(1) containing the extramembraneous catalytic core and F(0) containing the membrane proton channel, linked together by a central stalk and a peripheral stalk. During catalysis, ATP synthesis in the catalytic domain of F(1) is coupled via a rotary mechanism of the central stalk subunits to proton translocation. Functionally, this protein is part of the stalk that links CF(0) to CF(1). It either transmits conformational changes from CF(0) to CF(1) or is implicated in proton conduction. The polypeptide is ATP synthase subunit delta (Vibrio alginolyticus).